We begin with the raw amino-acid sequence, 508 residues long: Photosystem II CP47 reaction center protein (508 aa).

6 helical membrane passes run 21–36, 101–115, 140–156, 203–218, 237–252, and 457–472; these read AVHI…WAGS, IVFS…IWHW, GIHL…FGAF, IAAG…FHLS, VLSS…AFVV, and TFAL…HGAR.

This sequence belongs to the PsbB/PsbC family. PsbB subfamily. As to quaternary structure, PSII is composed of 1 copy each of membrane proteins PsbA, PsbB, PsbC, PsbD, PsbE, PsbF, PsbH, PsbI, PsbJ, PsbK, PsbL, PsbM, PsbT, PsbX, PsbY, PsbZ, Psb30/Ycf12, at least 3 peripheral proteins of the oxygen-evolving complex and a large number of cofactors. It forms dimeric complexes. The cofactor is Binds multiple chlorophylls. PSII binds additional chlorophylls, carotenoids and specific lipids..

The protein localises to the plastid. The protein resides in the chloroplast thylakoid membrane. In terms of biological role, one of the components of the core complex of photosystem II (PSII). It binds chlorophyll and helps catalyze the primary light-induced photochemical processes of PSII. PSII is a light-driven water:plastoquinone oxidoreductase, using light energy to abstract electrons from H(2)O, generating O(2) and a proton gradient subsequently used for ATP formation. This Hordeum vulgare (Barley) protein is Photosystem II CP47 reaction center protein.